The sequence spans 23 residues: Basic phospholipase A2 CB1 (23 aa).

In terms of assembly, heterodimer of an acidic subunit and a basic chain. The acidic subunit is non-toxic, without enzymatic activity and comprises 3 peptides that are cross-linked by 7 disulfide bridges. The basic subunit is toxic, has phospholipase A2 activity and is composed of a single chain. Requires Ca(2+) as cofactor. Post-translationally, contains 7 disulfide bonds. In terms of tissue distribution, expressed by the venom gland.

Its subcellular location is the secreted. It catalyses the reaction a 1,2-diacyl-sn-glycero-3-phosphocholine + H2O = a 1-acyl-sn-glycero-3-phosphocholine + a fatty acid + H(+). In terms of biological role, snake venom phospholipase A2 (PLA2) that shows presynaptic neurotoxicity. PLA2 catalyzes the calcium-dependent hydrolysis of the 2-acyl groups in 3-sn-phosphoglycerides. The polypeptide is Basic phospholipase A2 CB1 (Crotalus basiliscus (Mexican west-coast rattlesnake)).